Consider the following 382-residue polypeptide: Calcium/calmodulin-dependent protein kinase (382 aa).

The region spanning 23-278 (YKFGRTLGAG…SKEALGHIWL (256 aa)) is the Protein kinase domain. ATP is bound by residues 29–37 (LGAGTYGVV) and lysine 50. Residue aspartate 142 is the Proton acceptor of the active site. The segment at 291 to 301 (ELEAYRRRARL) is calmodulin-binding. 2 disordered regions span residues 318–344 (KEHEEDPSESDMGDAQGASDNHKGDGS) and 359–382 (QKQESLQVEEELEKESRRRSFSNA).

The protein belongs to the protein kinase superfamily. CAMK Ser/Thr protein kinase family. CaMK subfamily.

The enzyme catalyses L-seryl-[protein] + ATP = O-phospho-L-seryl-[protein] + ADP + H(+). The catalysed reaction is L-threonyl-[protein] + ATP = O-phospho-L-threonyl-[protein] + ADP + H(+). In Metarhizium anisopliae (Entomophthora anisopliae), this protein is Calcium/calmodulin-dependent protein kinase.